The following is a 726-amino-acid chain: Procollagen-lysine,2-oxoglutarate 5-dioxygenase 1 (726 aa).

Positions 1-18 are cleaved as a signal peptide; it reads MRLLLLLAPLGWLLLAET. Asparagine 196 and asparagine 537 each carry an N-linked (GlcNAc...) asparagine glycan. Residues 635–726 form the Fe2OG dioxygenase domain; the sequence is QFDLAFVVRY…RYIAVSFVDP (92 aa). Residues histidine 655 and aspartate 657 each coordinate Fe cation. Asparagine 685 carries an N-linked (GlcNAc...) asparagine glycan. Histidine 707 contacts Fe cation. Residue arginine 717 is part of the active site.

As to quaternary structure, homodimer. Identified in a complex with P3H3 and P3H4. Requires Fe(2+) as cofactor. L-ascorbate serves as cofactor.

The protein resides in the rough endoplasmic reticulum membrane. It carries out the reaction L-lysyl-[collagen] + 2-oxoglutarate + O2 = (5R)-5-hydroxy-L-lysyl-[collagen] + succinate + CO2. Part of a complex composed of PLOD1, P3H3 and P3H4 that catalyzes hydroxylation of lysine residues in collagen alpha chains and is required for normal assembly and cross-linkling of collagen fibrils. Forms hydroxylysine residues in -Xaa-Lys-Gly- sequences in collagens. These hydroxylysines serve as sites of attachment for carbohydrate units and are essential for the stability of the intermolecular collagen cross-links. This is Procollagen-lysine,2-oxoglutarate 5-dioxygenase 1 (PLOD1) from Bos taurus (Bovine).